Here is a 193-residue protein sequence, read N- to C-terminus: Adenylate kinase (193 aa).

11 to 16 (GSGKGT) provides a ligand contact to ATP. Residues 31–60 (STGDIFRANVKGETPLGLEAKKYMDAGDYV) form an NMP region. Residues Thr32, Arg37, 58-60 (DYV), 86-89 (GYPR), and Gln93 each bind AMP. Residues 127–137 (GRAKESGRSDD) are LID. Arg128 is a binding site for ATP. Residues Arg134 and Arg145 each coordinate AMP. ATP is bound at residue Gly173.

The protein belongs to the adenylate kinase family. As to quaternary structure, monomer.

It is found in the cytoplasm. The enzyme catalyses AMP + ATP = 2 ADP. The protein operates within purine metabolism; AMP biosynthesis via salvage pathway; AMP from ADP: step 1/1. Its function is as follows. Catalyzes the reversible transfer of the terminal phosphate group between ATP and AMP. Plays an important role in cellular energy homeostasis and in adenine nucleotide metabolism. The protein is Adenylate kinase of Renibacterium salmoninarum (strain ATCC 33209 / DSM 20767 / JCM 11484 / NBRC 15589 / NCIMB 2235).